The sequence spans 445 residues: Rab GDP dissociation inhibitor beta (445 aa).

Met-1 is modified (N-acetylmethionine). Lys-57 is modified (N6-succinyllysine). An N6-acetyllysine modification is found at Lys-112. Ser-130 bears the Phosphoserine mark. N6-acetyllysine is present on Lys-269. Position 382 is a phosphoserine (Ser-382).

It belongs to the Rab GDI family. As to quaternary structure, interacts with RHOH. Interacts with the GDP-bound inactive forms of RAB3A, RAB3B, RAB3C, RAB5A, RAB5B, RAB5C, RAB8A, RAB8B, RAB10, RAB12, RAB35, and RAB43; binds RAB3D to a lesser extent. Interacts with DZIP1; this interaction negatively regulates the interaction of GDI2 with GDP-bound RAB8A.

It localises to the cytoplasm. Its subcellular location is the membrane. The protein localises to the golgi apparatus. It is found in the trans-Golgi network. Functionally, GDP-dissociation inhibitor preventing the GDP to GTP exchange of most Rab proteins. By keeping these small GTPases in their inactive GDP-bound form regulates intracellular membrane trafficking. Negatively regulates protein transport to the cilium and ciliogenesis through the inhibition of RAB8A. This Pongo abelii (Sumatran orangutan) protein is Rab GDP dissociation inhibitor beta (GDI2).